The following is a 571-amino-acid chain: MRTSQFLLSTLKETPSDAVVISHQLMLRAGMIRKLASGLYTWMPMGLRALRKAEAIVREEMNKAGALEVLMPAIQPAELWQESGRWEQYGPELLRLKDRHDREFCVGPTHEEVITDLARNELNSYKQLPINFYQIQTKFRDEIRPRFGLMRGREFLMKDAYSFHLNQESLQETYDRMHQAYCNIFTRLGLNFRPVQADTGSIGGTGSHEFHVLAESGEDDIAFSDSSDYAANIEKAEAIPRETERAAPGEELRLIDTPDAKTIIELVEQFGVAVEKTVKTLVVHGVEKGQLVALIVRGDHELNEIKAANLAQVASPLVFASEAEIRAAIGAGPGSLGPLNLPIPCVIDRSVALMSDFSAGANIDDKHYLGLNWERDLPLPQVADLRNVVAGDPSPDGKGSLVIKRGIEVGHIFQLGTKYSEAMNCQVMGENGKPATLIMGCYGIGVSRVVAAAIEQNYDERGILWPDALAPFQIALVPMKYETEAVREATDKLYAELTAAGYEVLLDDRDKKTSPGVKFADMELIGIPHRIVVSDRGLADGMLEYKHRRDAQPQQVAVSDILSFINSRVHR.

The protein belongs to the class-II aminoacyl-tRNA synthetase family. ProS type 1 subfamily. Homodimer.

The protein localises to the cytoplasm. The enzyme catalyses tRNA(Pro) + L-proline + ATP = L-prolyl-tRNA(Pro) + AMP + diphosphate. Its function is as follows. Catalyzes the attachment of proline to tRNA(Pro) in a two-step reaction: proline is first activated by ATP to form Pro-AMP and then transferred to the acceptor end of tRNA(Pro). As ProRS can inadvertently accommodate and process non-cognate amino acids such as alanine and cysteine, to avoid such errors it has two additional distinct editing activities against alanine. One activity is designated as 'pretransfer' editing and involves the tRNA(Pro)-independent hydrolysis of activated Ala-AMP. The other activity is designated 'posttransfer' editing and involves deacylation of mischarged Ala-tRNA(Pro). The misacylated Cys-tRNA(Pro) is not edited by ProRS. This chain is Proline--tRNA ligase, found in Stutzerimonas stutzeri (strain A1501) (Pseudomonas stutzeri).